The primary structure comprises 64 residues: MKLSVMFIVFLMLTMPMTCAGISRSATNGGEADVRAHDKAANLMALLQERMCPPLCKPSCTNCG.

Residues 1–20 (MKLSVMFIVFLMLTMPMTCA) form the signal peptide. A propeptide spanning residues 21–50 (GISRSATNGGEADVRAHDKAANLMALLQER) is cleaved from the precursor. 2 disulfide bridges follow: C52/C60 and C56/C63. Residue C63 is modified to Cysteine amide.

The protein belongs to the conotoxin L superfamily. Post-translationally, may contain a 4-hydroxyproline. Expressed by the venom duct.

Its subcellular location is the secreted. Alpha-conotoxins act on postsynaptic membranes, they bind to the nicotinic acetylcholine receptors (nAChR) and thus inhibit them. This synthetic peptide displays analgesic activity in a hot plate assay. Analgesia is also observed against second phase pain in formalin-induced inflammatory pain model, and in a rat model of mechanically-induced pain. Effects downstream of nAChR are inhibition of calcium influx, inhibition of ERK1/2 phosphorylation and inhibition of c-fos/NOS expression. Genes associated with drug dependence are not up-regulated by this toxin. Treatment with this toxin reversed morphine withdrawal symptoms in mice. The protein is Alpha-conotoxin Lt14.1 of Conus litteratus (Lettered cone).